A 393-amino-acid polypeptide reads, in one-letter code: Acetate kinase (393 aa).

Mg(2+) is bound at residue Asn10. Residue Lys17 coordinates ATP. Residue Arg89 participates in substrate binding. The active-site Proton donor/acceptor is the Asp146. Residues 204-208, 278-280, and 323-327 each bind ATP; these read HLGNG, DMR, and GVGEN. Glu376 is a Mg(2+) binding site.

This sequence belongs to the acetokinase family. Homodimer. It depends on Mg(2+) as a cofactor. The cofactor is Mn(2+).

It localises to the cytoplasm. The enzyme catalyses acetate + ATP = acetyl phosphate + ADP. It functions in the pathway metabolic intermediate biosynthesis; acetyl-CoA biosynthesis; acetyl-CoA from acetate: step 1/2. Functionally, catalyzes the formation of acetyl phosphate from acetate and ATP. Can also catalyze the reverse reaction. The chain is Acetate kinase from Mycoplasma genitalium (strain ATCC 33530 / DSM 19775 / NCTC 10195 / G37) (Mycoplasmoides genitalium).